The sequence spans 215 residues: 24 kDa Ras-like protein (215 aa).

Residue 17 to 24 (GGGGVGKS) coordinates GTP. The Effector region motif lies at 39 to 47 (YDPTIEDSY). Residues 64–68 (DTAGQ) and 123–126 (NKCD) each bind GTP. Residues 179 to 199 (QTGRPAIAAGGGGPAGSYTQD) are disordered. Cys212 is modified (cysteine methyl ester). The S-farnesyl cysteine moiety is linked to residue Cys212. Positions 213 to 215 (VIA) are cleaved as a propeptide — removed in mature form.

It belongs to the small GTPase superfamily. Ras family.

The protein localises to the cell membrane. The enzyme catalyses GTP + H2O = GDP + phosphate + H(+). Ras proteins bind GDP/GTP and possess intrinsic GTPase activity. This chain is 24 kDa Ras-like protein (CC-RAS), found in Coprinopsis cinerea (strain Okayama-7 / 130 / ATCC MYA-4618 / FGSC 9003) (Inky cap fungus).